A 341-amino-acid polypeptide reads, in one-letter code: N-acetyl-gamma-glutamyl-phosphate reductase (341 aa).

C147 is a catalytic residue.

This sequence belongs to the NAGSA dehydrogenase family. Type 1 subfamily.

The protein localises to the cytoplasm. The catalysed reaction is N-acetyl-L-glutamate 5-semialdehyde + phosphate + NADP(+) = N-acetyl-L-glutamyl 5-phosphate + NADPH + H(+). It functions in the pathway amino-acid biosynthesis; L-arginine biosynthesis; N(2)-acetyl-L-ornithine from L-glutamate: step 3/4. Catalyzes the NADPH-dependent reduction of N-acetyl-5-glutamyl phosphate to yield N-acetyl-L-glutamate 5-semialdehyde. In Staphylococcus epidermidis (strain ATCC 35984 / DSM 28319 / BCRC 17069 / CCUG 31568 / BM 3577 / RP62A), this protein is N-acetyl-gamma-glutamyl-phosphate reductase.